The primary structure comprises 325 residues: Pyruvate dehydrogenase E1 component subunit beta (325 aa).

E60 provides a ligand contact to thiamine diphosphate.

As to quaternary structure, heterodimer of an alpha and a beta chain. It depends on thiamine diphosphate as a cofactor.

It carries out the reaction N(6)-[(R)-lipoyl]-L-lysyl-[protein] + pyruvate + H(+) = N(6)-[(R)-S(8)-acetyldihydrolipoyl]-L-lysyl-[protein] + CO2. Its function is as follows. The pyruvate dehydrogenase complex catalyzes the overall conversion of pyruvate to acetyl-CoA and CO(2). It contains multiple copies of three enzymatic components: pyruvate dehydrogenase (E1), dihydrolipoamide acetyltransferase (E2) and lipoamide dehydrogenase (E3). The polypeptide is Pyruvate dehydrogenase E1 component subunit beta (pdhB) (Staphylococcus epidermidis (strain ATCC 35984 / DSM 28319 / BCRC 17069 / CCUG 31568 / BM 3577 / RP62A)).